The sequence spans 128 residues: MSEKIDQIVEDLKTLTLLEASELVTKIEETFGVDASAAASGGVVMAAAPAVVEEVEEKTEFNLMLDEVPADKKIAVLKVVRSLTGLGLKEAKELVESAPKQIQEGLGKDAAEEAKKQIEAAGGKASLT.

This sequence belongs to the bacterial ribosomal protein bL12 family. In terms of assembly, homodimer. Part of the ribosomal stalk of the 50S ribosomal subunit. Forms a multimeric L10(L12)X complex, where L10 forms an elongated spine to which 2 to 4 L12 dimers bind in a sequential fashion. Binds GTP-bound translation factors.

The protein resides in the plastid. It localises to the chloroplast. In terms of biological role, forms part of the ribosomal stalk which helps the ribosome interact with GTP-bound translation factors. Is thus essential for accurate translation. In Phaeodactylum tricornutum (strain CCAP 1055/1), this protein is Large ribosomal subunit protein bL12c.